A 364-amino-acid chain; its full sequence is Aminomethyltransferase (364 aa).

The protein belongs to the GcvT family. As to quaternary structure, the glycine cleavage system is composed of four proteins: P, T, L and H.

It catalyses the reaction N(6)-[(R)-S(8)-aminomethyldihydrolipoyl]-L-lysyl-[protein] + (6S)-5,6,7,8-tetrahydrofolate = N(6)-[(R)-dihydrolipoyl]-L-lysyl-[protein] + (6R)-5,10-methylene-5,6,7,8-tetrahydrofolate + NH4(+). In terms of biological role, the glycine cleavage system catalyzes the degradation of glycine. In Shewanella woodyi (strain ATCC 51908 / MS32), this protein is Aminomethyltransferase.